The following is a 344-amino-acid chain: MRSKNDTILKAIKGESTSHTPVWFMRQAGRSQPEYRKLKEKYSLFEITHQPELCAYVTHLPVDNYQTDAAVLYKDIMTPLKPIGVDVEIKSGIGPVISNPIQTVKDVERLSQIDPKRDVPYVLDTIKLLTEEKLNVPLIGFTGAPFTLASYMIEGGPSKNYNFTKAMMYRDEETWFALMNHLVDISIDYVVAQVEAGAEIIQIFDSWVGALNVKDYRYYIKPAMNKLISGIKAYYDVPIILFGVGASHLINEWNDLPIDVLGLDWRTTIKQADKMGVNKAIQGNLDPSVLLAPWDVIESRLKDILNQGLNRGKHIFNLGHGVFPEVKPETLRKVTEFVHNYTAK.

Residues 26–30 (RQAGR), Phe45, Asp75, Tyr151, Ser206, and His320 each bind substrate.

This sequence belongs to the uroporphyrinogen decarboxylase family. As to quaternary structure, homodimer.

It is found in the cytoplasm. It carries out the reaction uroporphyrinogen III + 4 H(+) = coproporphyrinogen III + 4 CO2. It participates in porphyrin-containing compound metabolism; protoporphyrin-IX biosynthesis; coproporphyrinogen-III from 5-aminolevulinate: step 4/4. Its function is as follows. Catalyzes the decarboxylation of four acetate groups of uroporphyrinogen-III to yield coproporphyrinogen-III. The protein is Uroporphyrinogen decarboxylase of Staphylococcus epidermidis (strain ATCC 35984 / DSM 28319 / BCRC 17069 / CCUG 31568 / BM 3577 / RP62A).